We begin with the raw amino-acid sequence, 246 residues long: Probable septum site-determining protein MinC (246 aa).

This sequence belongs to the MinC family. In terms of assembly, interacts with MinD and FtsZ.

Functionally, cell division inhibitor that blocks the formation of polar Z ring septums. Rapidly oscillates between the poles of the cell to destabilize FtsZ filaments that have formed before they mature into polar Z rings. Prevents FtsZ polymerization. In Pseudomonas syringae pv. tomato (strain ATCC BAA-871 / DC3000), this protein is Probable septum site-determining protein MinC.